The primary structure comprises 145 residues: Bacilliredoxin BLi02578/BL01507 (145 aa).

The protein belongs to the bacilliredoxin family.

This is Bacilliredoxin BLi02578/BL01507 from Bacillus licheniformis (strain ATCC 14580 / DSM 13 / JCM 2505 / CCUG 7422 / NBRC 12200 / NCIMB 9375 / NCTC 10341 / NRRL NRS-1264 / Gibson 46).